The sequence spans 1354 residues: Eukaryotic translation initiation factor 3 subunit A (1354 aa).

At lysine 68 the chain carries N6-acetyllysine. Positions 82–120 (NIKSLEDVVRAYLKLAEEKTEAAKEESQQMVLDIEDLDN) form a coiled coil. Positions 315–498 (MQRMSTRVLL…RTLSFGSDLN (184 aa)) constitute a PCI domain. A phosphoserine mark is found at serine 492 and serine 584. The tract at residues 664-835 (LDPDFIMAKQ…REERERAERA (172 aa)) is interaction with EIF3B. Disordered regions lie at residues 809–844 (EKEEEEQRRAEEQMLKEREERERAERAKREEELREY), 866–1249 (EERE…RDRD), and 1262–1354 (DLRD…TVRR). Basic and acidic residues-rich tracts occupy residues 866–1136 (EERE…DDAR), 1148–1249 (GWRE…RDRD), 1262–1302 (DLRD…DPPR), and 1310–1343 (SRERERERDREGEKEKASWRAEKDRESLRRTKNE). Serine 895 is subject to Phosphoserine. The stretch at 924–931 (DDERPHRR) is one 1; truncated repeat. The 22 X 10 AA approximate tandem repeats of [DA]-[DE]-[ED]-R-[PLIGFSV]-[RPS]-[RW]-[RL]-[GNIHT]-[DGLPTAM] stretch occupies residues 924–1143 (DDERPHRRDE…DARPGPWRPF (220 aa)). Residues 932–941 (DEDRLRRLGG) form repeat 2. One copy of the 3; approximate repeat lies at 942-951 (DDEERESSLR). The residue at position 949 (serine 949) is a Phosphoserine. Tandem repeats lie at residues 953 to 962 (DDDRIPRRGL), 963 to 972 (DDDRGPRRGP), 973 to 982 (DEDRFSRRGT), 983 to 992 (DDDRPSWRNA), 993 to 1002 (DDDRPPRRIG), 1003 to 1012 (DDDRGSWRHT), 1013 to 1022 (DDDRPPRRGL), 1023 to 1032 (DDDRPPRRGL), 1033 to 1042 (DDERGSWRTA), 1043 to 1052 (EEDRGPRRGM), 1053 to 1062 (DDDRGPRRGG), 1064 to 1073 (DDERSSWRNA), 1074 to 1083 (DDDRGPRRGM), 1084 to 1093 (DDDRGPRRGL), 1094 to 1103 (DDDRGPWRNA), 1104 to 1113 (AEDRISRRGA), 1114 to 1123 (DDDRGPWRNM), and 1124 to 1133 (DDDRVPRRGD). Serine 1038 is modified (phosphoserine). Residues 1134 to 1143 (DARPGPWRPF) form a 22; approximate repeat. Phosphoserine is present on residues serine 1159 and serine 1233. A phosphoserine mark is found at serine 1310 and serine 1336.

The protein belongs to the eIF-3 subunit A family. As to quaternary structure, component of the eukaryotic translation initiation factor 3 (eIF-3) complex, which is composed of 13 subunits: EIF3A, EIF3B, EIF3C, EIF3D, EIF3E, EIF3F, EIF3G, EIF3H, EIF3I, EIF3J, EIF3K, EIF3L and EIF3M. The eIF-3 complex appears to include 3 stable modules: module A is composed of EIF3A, EIF3B, EIF3G and EIF3I; module B is composed of EIF3F, EIF3H, and EIF3M; and module C is composed of EIF3C, EIF3D, EIF3E, EIF3L and EIF3K. EIF3C of module C binds EIF3B of module A and EIF3H of module B, thereby linking the three modules. EIF3J is a labile subunit that binds to the eIF-3 complex via EIF3B. The eIF-3 complex interacts with RPS6KB1 under conditions of nutrient depletion. Mitogenic stimulation leads to binding and activation of a complex composed of MTOR and RPTOR, leading to phosphorylation and release of RPS6KB1 and binding of EIF4B to eIF-3. Interacts with EIF4G1. Also interacts with KRT7 and PIWIL2. Phosphorylated. Phosphorylation is enhanced upon serum stimulation.

The protein localises to the cytoplasm. RNA-binding component of the eukaryotic translation initiation factor 3 (eIF-3) complex, which is required for several steps in the initiation of protein synthesis. The eIF-3 complex associates with the 40S ribosome and facilitates the recruitment of eIF-1, eIF-1A, eIF-2:GTP:methionyl-tRNAi and eIF-5 to form the 43S pre-initiation complex (43S PIC). The eIF-3 complex stimulates mRNA recruitment to the 43S PIC and scanning of the mRNA for AUG recognition. The eIF-3 complex is also required for disassembly and recycling of post-termination ribosomal complexes and subsequently prevents premature joining of the 40S and 60S ribosomal subunits prior to initiation. The eIF-3 complex specifically targets and initiates translation of a subset of mRNAs involved in cell proliferation, including cell cycling, differentiation and apoptosis, and uses different modes of RNA stem-loop binding to exert either translational activation or repression. This Rattus norvegicus (Rat) protein is Eukaryotic translation initiation factor 3 subunit A (Eif3a).